Reading from the N-terminus, the 412-residue chain is UPF0761 membrane protein LPC_2650 (412 aa).

A run of 6 helical transmembrane segments spans residues 36-56 (ALAF…LAIF), 99-119 (LSIW…FTIE), 137-157 (AFLL…LSLA), 177-197 (ILHY…YVVV), 210-230 (GGLV…YYLI), and 241-261 (AFAT…ITLL).

It belongs to the UPF0761 family.

It localises to the cell inner membrane. The chain is UPF0761 membrane protein LPC_2650 from Legionella pneumophila (strain Corby).